Consider the following 279-residue polypeptide: Large ribosomal subunit protein uL2 (279 aa).

Residues 223–279 (MAMNPVDHPMGGGEGKSKSGGGRKHPKSPWGQLAKGLKTRNKKKASTKLIVRGRKAK) form a disordered region. Residues 232–242 (MGGGEGKSKSG) show a composition bias toward gly residues. A compositionally biased stretch (basic residues) spans 259–279 (LKTRNKKKASTKLIVRGRKAK).

It belongs to the universal ribosomal protein uL2 family. As to quaternary structure, part of the 50S ribosomal subunit. Forms a bridge to the 30S subunit in the 70S ribosome.

One of the primary rRNA binding proteins. Required for association of the 30S and 50S subunits to form the 70S ribosome, for tRNA binding and peptide bond formation. It has been suggested to have peptidyltransferase activity; this is somewhat controversial. Makes several contacts with the 16S rRNA in the 70S ribosome. The protein is Large ribosomal subunit protein uL2 of Chlorobaculum tepidum (strain ATCC 49652 / DSM 12025 / NBRC 103806 / TLS) (Chlorobium tepidum).